Reading from the N-terminus, the 133-residue chain is Ribonuclease P protein component (133 aa).

The protein belongs to the RnpA family. As to quaternary structure, consists of a catalytic RNA component (M1 or rnpB) and a protein subunit.

It catalyses the reaction Endonucleolytic cleavage of RNA, removing 5'-extranucleotides from tRNA precursor.. Functionally, RNaseP catalyzes the removal of the 5'-leader sequence from pre-tRNA to produce the mature 5'-terminus. It can also cleave other RNA substrates such as 4.5S RNA. The protein component plays an auxiliary but essential role in vivo by binding to the 5'-leader sequence and broadening the substrate specificity of the ribozyme. This Corynebacterium efficiens (strain DSM 44549 / YS-314 / AJ 12310 / JCM 11189 / NBRC 100395) protein is Ribonuclease P protein component.